Consider the following 155-residue polypeptide: Ribosome maturation factor RimP (155 aa).

This sequence belongs to the RimP family.

It is found in the cytoplasm. Functionally, required for maturation of 30S ribosomal subunits. In Staphylococcus aureus (strain JH9), this protein is Ribosome maturation factor RimP.